The primary structure comprises 255 residues: MAENDSWDADDFEAEDLNQKGAASGPVIVKDRWEGEDEEEDVKDNWDDEEEAQDATKQEPQKTELKVPEKKKLQEKIKEKENLQKKRKEELKKQALESSNLPEITPEEQLAEKLRQQKLQEDSDLELAKEAFGVNVPVTGIDAMNPSTREDFTEFGKLLKEKITQYERSLYYPGFLEALVRDVCLSLEVEDLKKINSSLTVLCFEKQKQEKQQTKTKKKKKGVVPGGGLKGNMKDYLEDYGGMDEGYGREFDDFM.

2 stretches are compositionally biased toward acidic residues: residues 1-16 (MAEN…EAED) and 34-53 (EGED…EEAQ). Residues 1–107 (MAENDSWDAD…SSNLPEITPE (107 aa)) are disordered. Basic and acidic residues predominate over residues 54–95 (DATKQEPQKTELKVPEKKKLQEKIKEKENLQKKRKEELKKQA). Residues 69 to 131 (EKKKLQEKIK…DSDLELAKEA (63 aa)) adopt a coiled-coil conformation.

The protein belongs to the eIF-3 subunit J family. As to quaternary structure, component of the eukaryotic translation initiation factor 3 (eIF-3) complex, which is composed of 13 subunits: eif3a, eif3b, eif3c, eif3d, eif3e, eif3f, eif3g, eif3h, eif3i, eif3j, eif3k, eif3l and eif3m.

The protein resides in the cytoplasm. Its function is as follows. Component of the eukaryotic translation initiation factor 3 (eIF-3) complex, which is involved in protein synthesis of a specialized repertoire of mRNAs and, together with other initiation factors, stimulates binding of mRNA and methionyl-tRNAi to the 40S ribosome. The eIF-3 complex specifically targets and initiates translation of a subset of mRNAs involved in cell proliferation. The sequence is that of Eukaryotic translation initiation factor 3 subunit J (eif3j) from Xenopus laevis (African clawed frog).